The sequence spans 169 residues: Peptide deformylase (169 aa).

Cys94 and His136 together coordinate Fe cation. Glu137 is a catalytic residue. Fe cation is bound at residue His140.

It belongs to the polypeptide deformylase family. Fe(2+) serves as cofactor.

It carries out the reaction N-terminal N-formyl-L-methionyl-[peptide] + H2O = N-terminal L-methionyl-[peptide] + formate. In terms of biological role, removes the formyl group from the N-terminal Met of newly synthesized proteins. Requires at least a dipeptide for an efficient rate of reaction. N-terminal L-methionine is a prerequisite for activity but the enzyme has broad specificity at other positions. The protein is Peptide deformylase of Phenylobacterium zucineum (strain HLK1).